Reading from the N-terminus, the 1178-residue chain is Pesticidal crystal protein Cry1Ac (1178 aa).

It belongs to the delta endotoxin family.

In terms of biological role, promotes colloidosmotic lysis by binding to the midgut epithelial cells of many lepidopteran larvae. The protein is Pesticidal crystal protein Cry1Ac (cry1Ac) of Bacillus thuringiensis subsp. kurstaki.